We begin with the raw amino-acid sequence, 223 residues long: Cytotoxic T-lymphocyte protein 4 (223 aa).

A signal peptide spans 1 to 35; the sequence is MACLGFQRHKAQLNLATRTWPCTLLFFLLFIPVFC. At 36–161 the chain is on the extracellular side; the sequence is KAMHVAQPAV…IDPEPCPDSD (126 aa). One can recognise an Ig-like V-type domain in the interval 39-140; that stretch reads HVAQPAVVLA…VELMYPPPYY (102 aa). Positions 46 to 50 are homodimerization; it reads VLASS. Cystine bridges form between C58–C129 and C85–C103. N113 carries an N-linked (GlcNAc...) asparagine glycan. Residues 134–139 are important for interaction with CD80 and CD86; that stretch reads MYPPPY. A glycan (N-linked (GlcNAc...) asparagine) is linked at N145. The tract at residues 150–155 is homodimerization; sequence YVIDPE. Residues 162–182 form a helical membrane-spanning segment; sequence FLLWILAAVSSGLFFYSFLLT. Topologically, residues 183-223 are cytoplasmic; it reads AVSLSKMLKKRSPLTTGVYVKMPPTEPECEKQFQPYFIPIN. Y201 carries the post-translational modification Phosphotyrosine; by TXK and JAK2.

In terms of assembly, homodimer; disulfide-linked. Binds to CD80/B7-1 and CD86/B7.2. Interacts with ICOSLG. Post-translationally, N-glycosylation is important for dimerization. In terms of processing, phosphorylation at Tyr-201 prevents binding to the AP-2 adapter complex, blocks endocytosis, and leads to retention of CTLA4 on the cell surface. In terms of tissue distribution, widely expressed with highest levels in lymphoid tissues. Detected in activated T-cells where expression levels are 30- to 50-fold less than CD28, the stimulatory coreceptor, on the cell surface following activation.

Its subcellular location is the cell membrane. In terms of biological role, inhibitory receptor acting as a major negative regulator of T-cell responses. The affinity of CTLA4 for its natural B7 family ligands, CD80 and CD86, is considerably stronger than the affinity of their cognate stimulatory coreceptor CD28. In Homo sapiens (Human), this protein is Cytotoxic T-lymphocyte protein 4 (CTLA4).